Here is a 175-residue protein sequence, read N- to C-terminus: RNA pyrophosphohydrolase (175 aa).

In terms of domain architecture, Nudix hydrolase spans 6–150 (GFRPNVGIVI…KREVYRRVMK (145 aa)). The short motif at 38-59 (GGVDDGETPEQAMYRELYEEIG) is the Nudix box element.

The protein belongs to the Nudix hydrolase family. RppH subfamily. It depends on a divalent metal cation as a cofactor.

Its function is as follows. Accelerates the degradation of transcripts by removing pyrophosphate from the 5'-end of triphosphorylated RNA, leading to a more labile monophosphorylated state that can stimulate subsequent ribonuclease cleavage. The polypeptide is RNA pyrophosphohydrolase (Aeromonas hydrophila subsp. hydrophila (strain ATCC 7966 / DSM 30187 / BCRC 13018 / CCUG 14551 / JCM 1027 / KCTC 2358 / NCIMB 9240 / NCTC 8049)).